Here is a 277-residue protein sequence, read N- to C-terminus: Diaminopimelate epimerase (277 aa).

Positions 11 and 62 each coordinate substrate. Cysteine 71 functions as the Proton donor in the catalytic mechanism. Residues 72–73, asparagine 160, asparagine 193, and 211–212 contribute to the substrate site; these read GN and ER. Residue cysteine 220 is the Proton acceptor of the active site. 221 to 222 contacts substrate; it reads GT.

The protein belongs to the diaminopimelate epimerase family. In terms of assembly, homodimer.

It localises to the cytoplasm. The enzyme catalyses (2S,6S)-2,6-diaminopimelate = meso-2,6-diaminopimelate. The protein operates within amino-acid biosynthesis; L-lysine biosynthesis via DAP pathway; DL-2,6-diaminopimelate from LL-2,6-diaminopimelate: step 1/1. Catalyzes the stereoinversion of LL-2,6-diaminopimelate (L,L-DAP) to meso-diaminopimelate (meso-DAP), a precursor of L-lysine. This chain is Diaminopimelate epimerase, found in Methanococcus maripaludis (strain C5 / ATCC BAA-1333).